We begin with the raw amino-acid sequence, 575 residues long: UvrABC system protein C (575 aa).

Positions A15 to V90 constitute a GIY-YIG domain. One can recognise a UVR domain in the interval G198–F233.

This sequence belongs to the UvrC family. In terms of assembly, interacts with UvrB in an incision complex.

The protein localises to the cytoplasm. In terms of biological role, the UvrABC repair system catalyzes the recognition and processing of DNA lesions. UvrC both incises the 5' and 3' sides of the lesion. The N-terminal half is responsible for the 3' incision and the C-terminal half is responsible for the 5' incision. The sequence is that of UvrABC system protein C from Natronomonas pharaonis (strain ATCC 35678 / DSM 2160 / CIP 103997 / JCM 8858 / NBRC 14720 / NCIMB 2260 / Gabara) (Halobacterium pharaonis).